Consider the following 565-residue polypeptide: Urocanate hydratase (565 aa).

NAD(+) contacts are provided by residues 61-62, glutamine 139, 185-187, glutamate 205, arginine 210, 251-252, 272-276, 282-283, and tyrosine 331; these read GG, GMG, NA, QTSAH, and YL. Cysteine 419 is a catalytic residue. Residues 453-472 are disordered; it reads LDSGSVASPNRETESMRDGS. Residues 463-472 are compositionally biased toward basic and acidic residues; the sequence is RETESMRDGS. Glycine 501 is a binding site for NAD(+).

The protein belongs to the urocanase family. NAD(+) is required as a cofactor.

The protein resides in the cytoplasm. It carries out the reaction 4-imidazolone-5-propanoate = trans-urocanate + H2O. The protein operates within amino-acid degradation; L-histidine degradation into L-glutamate; N-formimidoyl-L-glutamate from L-histidine: step 2/3. In terms of biological role, catalyzes the conversion of urocanate to 4-imidazolone-5-propionate. In Pseudomonas syringae pv. tomato (strain ATCC BAA-871 / DC3000), this protein is Urocanate hydratase.